Consider the following 304-residue polypeptide: UDP-3-O-acyl-N-acetylglucosamine deacetylase (304 aa).

Residues His-78, His-237, and Asp-241 each coordinate Zn(2+). The active-site Proton donor is His-264.

This sequence belongs to the LpxC family. It depends on Zn(2+) as a cofactor.

The catalysed reaction is a UDP-3-O-[(3R)-3-hydroxyacyl]-N-acetyl-alpha-D-glucosamine + H2O = a UDP-3-O-[(3R)-3-hydroxyacyl]-alpha-D-glucosamine + acetate. It participates in glycolipid biosynthesis; lipid IV(A) biosynthesis; lipid IV(A) from (3R)-3-hydroxytetradecanoyl-[acyl-carrier-protein] and UDP-N-acetyl-alpha-D-glucosamine: step 2/6. Its function is as follows. Catalyzes the hydrolysis of UDP-3-O-myristoyl-N-acetylglucosamine to form UDP-3-O-myristoylglucosamine and acetate, the committed step in lipid A biosynthesis. This is UDP-3-O-acyl-N-acetylglucosamine deacetylase from Methylococcus capsulatus (strain ATCC 33009 / NCIMB 11132 / Bath).